A 976-amino-acid polypeptide reads, in one-letter code: uncharacterized protein (976 aa).

This is an uncharacterized protein from Acanthamoeba polyphaga (Amoeba).